The following is a 398-amino-acid chain: Dual-specificity RNA methyltransferase RlmN (398 aa).

Glu119 functions as the Proton acceptor in the catalytic mechanism. The 240-residue stretch at 125-364 folds into the Radical SAM core domain; sequence EADRATLCVS…TIVRKTRGDD (240 aa). Residues Cys132 and Cys369 are joined by a disulfide bond. [4Fe-4S] cluster is bound by residues Cys139, Cys143, and Cys146. Residues 193 to 194, Ser225, 247 to 249, and Asn326 contribute to the S-adenosyl-L-methionine site; these read GE and SLH. Cys369 (S-methylcysteine intermediate) is an active-site residue.

The protein belongs to the radical SAM superfamily. RlmN family. It depends on [4Fe-4S] cluster as a cofactor.

It localises to the cytoplasm. It carries out the reaction adenosine(2503) in 23S rRNA + 2 reduced [2Fe-2S]-[ferredoxin] + 2 S-adenosyl-L-methionine = 2-methyladenosine(2503) in 23S rRNA + 5'-deoxyadenosine + L-methionine + 2 oxidized [2Fe-2S]-[ferredoxin] + S-adenosyl-L-homocysteine. It catalyses the reaction adenosine(37) in tRNA + 2 reduced [2Fe-2S]-[ferredoxin] + 2 S-adenosyl-L-methionine = 2-methyladenosine(37) in tRNA + 5'-deoxyadenosine + L-methionine + 2 oxidized [2Fe-2S]-[ferredoxin] + S-adenosyl-L-homocysteine. Its function is as follows. Specifically methylates position 2 of adenine 2503 in 23S rRNA and position 2 of adenine 37 in tRNAs. m2A2503 modification seems to play a crucial role in the proofreading step occurring at the peptidyl transferase center and thus would serve to optimize ribosomal fidelity. In Yersinia pseudotuberculosis serotype O:3 (strain YPIII), this protein is Dual-specificity RNA methyltransferase RlmN.